The chain runs to 1719 residues: 5'-3' exoribonuclease 1 (1719 aa).

Residues 1268-1298 are compositionally biased toward basic and acidic residues; the sequence is HKSGFTDHSVRHQQRKHDSQRKFKEEYKSPK. Residues 1268-1317 are disordered; it reads HKSGFTDHSVRHQQRKHDSQRKFKEEYKSPKAECQSQKLSSKQTSGGSAR. Polar residues predominate over residues 1301-1314; the sequence is CQSQKLSSKQTSGG. The residue at position 1382 (Ser1382) is a Phosphoserine. A compositionally biased stretch (basic and acidic residues) spans 1397–1430; the sequence is ILKIDSPDTRDSKNDMKKSDNEATVSSRRDERGV. 2 disordered regions span residues 1397–1445 and 1634–1719; these read ILKI…KPHG and ENKE…KPSE. Positions 1638–1660 are enriched in polar residues; that stretch reads AQSSQATPLQTNKPGSSEATKMT. Low complexity predominate over residues 1661-1680; the sequence is PQESPPASSSSSQAAQPVSS. Polar residues predominate over residues 1681–1690; that stretch reads HVETASQGHV.

Belongs to the 5'-3' exonuclease family. In terms of assembly, found in a mRNP complex with UPF1, UPF2, UPF3B and XRN1. Associates with alpha and beta tubulins. Interacts with DIS3L2. Interacts with ZC3HAV1 in an RNA-dependent manner. Interacts with ZFP36L1. Interacts with TRIM71 (via NHL repeats) in an RNA-dependent manner. Interacts with YTHDC2 (via ANK repeats). Interacts with DHX34; the interaction is RNA-independent. As to expression, expressed in heart, brain (spinal cord, dorsal root and superior cervical ganglia, neurons of the cerebrum and brain stem), peripheral nerve fibers in the skin and intestine, spleen, lung, liver, skeletal muscle, kidney and testis.

It is found in the cytoplasm. Its function is as follows. Major 5'-3' exoribonuclease involved in mRNA decay. Required for the 5'-3'-processing of the G4 tetraplex-containing DNA and RNA substrates. The kinetic of hydrolysis is faster for G4 RNA tetraplex than for G4 DNA tetraplex and monomeric RNA tetraplex. Binds to RNA and DNA. Plays a role in replication-dependent histone mRNA degradation. The polypeptide is 5'-3' exoribonuclease 1 (Mus musculus (Mouse)).